Consider the following 446-residue polypeptide: MLSNYVVKEILNDNKLKREYEFTIDNKYFFSQLDAKLLEIAKNVKIPGFRAGKASIDLIKKEYLNNAVNTLIRKIVEDTSSEFIKNGKFGEIISSNVSVISCPDYGMGVSSTSGDPAGDNLVYKLSFEVMPEAPLIALDDIVLSDIEADIQDSDISEFIENLKKQCSEFVEVSDSEYRVKMGDKVVVDYQNRIKGKMLKGGDTKDLAVIVGRGLVLKDFEDQLIGMKIGESKSFPIQFPDNYGVAYLVGKSADVSVTVKNIFMMKAIEENENVIKYYQFKDEQALKDFARNKIKQQFDKISFAIVKKELFDYLDKTYSIDVPECVVTKEIDKINQEIQDSAGTVQVDVKAEAMKRVKLGILLVKMSRHHNISINKDDVFSFINTYYSDYGISLNDVLRMLQSNKDFANYISGKVLEDKVINYIIRLVKKDKKVMTTQELNLMLENM.

One can recognise a PPIase FKBP-type domain in the interval 182–267 (GDKVVVDYQN…VKNIFMMKAI (86 aa)).

This sequence belongs to the FKBP-type PPIase family. Tig subfamily.

The protein localises to the cytoplasm. The catalysed reaction is [protein]-peptidylproline (omega=180) = [protein]-peptidylproline (omega=0). Functionally, involved in protein export. Acts as a chaperone by maintaining the newly synthesized protein in an open conformation. Functions as a peptidyl-prolyl cis-trans isomerase. The sequence is that of Trigger factor from Ehrlichia ruminantium (strain Gardel).